The sequence spans 466 residues: MKTKPLPTAPMAWAESAVETTTSPRELAGHAPLRRVLRPPIARRDGPVLLGDRAPRRTASTMWLLGIDPAESSPGTRATRDDTEQAVDKILRGARRAGGLTVPGAPRYHLTRQVTLTDLCQPNAEPAGALLLALRHPTDLPHLARHRAPPGRQTERLAEAWGQLLEASALGSGRAESGCARAGLVSFNFLVAACAAAYDARDAAEAVRAHITTNYGGTRAGARLDRFSECLRAMVHTHVFPHEVMRFFGGLVSWVTQDELASVTAVCSGPQEATHTGHPGRPRSAVTIPACAFVDLDAELCLGGPWGAFLYLVFTYRQCRDQELCCVYVVKSQLPPRGLEAALERLFGRLRITNTIHGAEDMTPPPPNRNVDFPLAVPAASSQSPRCSASQVTNPQFVDRLYRWQPDLRGRPTARTCTYAAFAELGVMPDDSPRCLHRTERFGAVGVPVVILEGVVWRAAGWRACA.

The interval 1–29 (MKTKPLPTAPMAWAESAVETTTSPRELAG) is disordered.

This sequence belongs to the herpesviridae TRX1 protein family. As to quaternary structure, interacts with TRX2, MCP and capsid vertex component 2/CVC2.

It localises to the virion. The protein resides in the host nucleus. Structural component of the T=16 icosahedral capsid. The capsid is composed of pentamers and hexamers of major capsid protein/MCP, which are linked together by heterotrimers called triplexes. These triplexes are formed by a single molecule of triplex protein 1/TRX1 and two copies of triplex protein 2/TRX2. Additionally, TRX1 is required for efficient transport of TRX2 to the nucleus, which is the site of capsid assembly. In Homo sapiens (Human), this protein is Triplex capsid protein 1.